Consider the following 566-residue polypeptide: 15-cis-phytoene desaturase, chloroplastic/chromoplastic (566 aa).

Residues 1–86 (MVVFGNVSAA…ASLSASFRSA (86 aa)) constitute a chloroplast and chromoplast transit peptide. FAD contacts are provided by residues Ala-103, 122-123 (EA), Lys-130, 147-148 (HI), and Tyr-153. Arg-288 is a binding site for substrate. Residues Ile-330 and Asp-519 each contribute to the FAD site. Ala-527 contributes to the substrate binding site. An FAD-binding site is contributed by Met-529.

It belongs to the carotenoid/retinoid oxidoreductase family. As to quaternary structure, homotetramer. The cofactor is FAD.

It is found in the plastid. Its subcellular location is the chloroplast. The protein resides in the chromoplast. It localises to the membrane. It catalyses the reaction 2 a plastoquinone + 15-cis-phytoene = 9,9',15-tri-cis-zeta-carotene + 2 a plastoquinol. It functions in the pathway carotenoid biosynthesis; lycopene biosynthesis. Functionally, converts phytoene into zeta-carotene via the intermediary of phytofluene by the symmetrical introduction of two double bonds at the C-11 and C-11' positions of phytoene with a concomitant isomerization of two neighboring double bonds at the C9 and C9' positions from trans to cis. This Arabidopsis thaliana (Mouse-ear cress) protein is 15-cis-phytoene desaturase, chloroplastic/chromoplastic (PDS).